The following is a 310-amino-acid chain: Coproporphyrin III ferrochelatase (310 aa).

Residues Tyr13, Arg30, 46–47, Ser54, and Tyr125 each bind Fe-coproporphyrin III; that span reads RY. Fe(2+) is bound by residues His183 and Glu264.

This sequence belongs to the ferrochelatase family.

The protein resides in the cytoplasm. It catalyses the reaction Fe-coproporphyrin III + 2 H(+) = coproporphyrin III + Fe(2+). It participates in porphyrin-containing compound metabolism; protoheme biosynthesis. Its function is as follows. Involved in coproporphyrin-dependent heme b biosynthesis. Catalyzes the insertion of ferrous iron into coproporphyrin III to form Fe-coproporphyrin III. The sequence is that of Coproporphyrin III ferrochelatase from Geobacillus sp. (strain WCH70).